A 975-amino-acid polypeptide reads, in one-letter code: MEKMNWLSRLASRVPGHRVPQGASLQTPVMADPETCLMVFKNHWSQVVRILERQGPRAATGGADDLSAVRNHTYQMLTLLAEDRAVPSAPSGPGPLLEFALREDLLSRVLTWQLQWDEFGDGVEERRAEQLKLFEMLVSEARQPLLRHGPVREALLALLDACGRPVPSSPALDEGLVLLLSQLCVCVAREPSLLEFFLQPPPEPGAAPRLLLFSRLVPFVHREGTLGQQARDALLLLMALSDGSPTVGRYIADHSYFCPVLATGLSALYSSLPRKIEVPGDDWHCLRREDWIGVPALALFMSSLEFCNAVIQVAHPLVQKQLVDYIHNGFLVPVMGPALHKTSVEEMIASTAYLELFLRSISEPALLRTFLRFLLLHRHDTHTILDTLVARIGSNSRLCMVSLSLFRTLLNLSCEDVLLQLVLRYLVPCNHVMLSQKPAVRDVDLYGRAADKFLSLIPRCCRHHAPSPPRPEHASWARGPGSPSVDSSSVVTVPRPSTPSRLALFLRQQSLGGSESPGPVPRSPGLTASPTSSPSRRPSPAEEPGELEDNYLEYLREARRGVDRCVRACRTWSAPYDGERPPPEPNPLGSRTKKRSLLPEEDRDNVREGEEENLGSRGLAVGVGDTPGYLLPPQLNGVPGPWPEGAKKVRLVPRLVPQEGVRELLEGTSEDMAGLESFGQELQELEVALSNGGAGSEPPLEPPLPPEEEEAYESFTCPPEPPGPFLSSPLRTLHQLPSQPFTGPFMAVLFAKLENMLQNSVYVNFLLTGLVAQLACHPQPLLRSFLLNTNMVFQPSVKSLLQVLGSVKNKIESFAASQEDFPALLSKAKKYLIARGKLDWAEGPTAGPAPRRSDSLVRSRRPSLGELLLRHAHSPTRARQAVQVLQPGRDGTGLGLGGGSPGASTPVLLPRGGASERQGEALRVKNAVYCAVIFPEFLKELAAISQAHAVTSPFLLDTSEEVSLPPISGFGPLNP.

Residues 465–496 (APSPPRPEHASWARGPGSPSVDSSSVVTVPRP) form a disordered region. Ser467 carries the post-translational modification Phosphoserine. Residues 482–496 (SPSVDSSSVVTVPRP) are compositionally biased toward low complexity. Ser510, Ser523, Ser529, and Ser533 each carry phosphoserine. Disordered regions lie at residues 511–548 (LGGSESPGPVPRSPGLTASPTSSPSRRPSPAEEPGELE), 573–621 (SAPY…GLAV), and 690–717 (SNGGAGSEPPLEPPLPPEEEEAYESFTC). Residues 527-538 (TASPTSSPSRRP) show a composition bias toward low complexity. Positions 597–608 (LLPEEDRDNVRE) are enriched in basic and acidic residues. Ser863 carries the post-translational modification Phosphoserine. The residue at position 892 (Thr892) is a Phosphothreonine. Ser900 bears the Phosphoserine mark.

Belongs to the FHIP family. In terms of assembly, component of the FTS/Hook/FHIP complex (FHF complex), composed of AKTIP/FTS, FHIP1B, and one or more members of the Hook family of proteins HOOK1, HOOK2, and HOOK3. The FHF complex associates with the homotypic vesicular sorting complex (the HOPS complex).

Component of the FTS/Hook/FHIP complex (FHF complex). The FHF complex may function to promote vesicle trafficking and/or fusion via the homotypic vesicular protein sorting complex (the HOPS complex). FHF complex promotes the distribution of AP-4 complex to the perinuclear area of the cell. This Mus musculus (Mouse) protein is FHF complex subunit HOOK-interacting protein 1B.